The following is a 251-amino-acid chain: Imidazole glycerol phosphate synthase subunit HisF (251 aa).

Active-site residues include Asp11 and Asp130.

It belongs to the HisA/HisF family. As to quaternary structure, heterodimer of HisH and HisF.

Its subcellular location is the cytoplasm. It carries out the reaction 5-[(5-phospho-1-deoxy-D-ribulos-1-ylimino)methylamino]-1-(5-phospho-beta-D-ribosyl)imidazole-4-carboxamide + L-glutamine = D-erythro-1-(imidazol-4-yl)glycerol 3-phosphate + 5-amino-1-(5-phospho-beta-D-ribosyl)imidazole-4-carboxamide + L-glutamate + H(+). The protein operates within amino-acid biosynthesis; L-histidine biosynthesis; L-histidine from 5-phospho-alpha-D-ribose 1-diphosphate: step 5/9. In terms of biological role, IGPS catalyzes the conversion of PRFAR and glutamine to IGP, AICAR and glutamate. The HisF subunit catalyzes the cyclization activity that produces IGP and AICAR from PRFAR using the ammonia provided by the HisH subunit. The chain is Imidazole glycerol phosphate synthase subunit HisF from Chlorobium phaeobacteroides (strain BS1).